The primary structure comprises 660 residues: DNA ligase (660 aa).

NAD(+) is bound by residues 32-36 (DEVYD), 81-82 (SM), and Glu112. Lys114 acts as the N6-AMP-lysine intermediate in catalysis. Arg135, Glu169, Lys284, and Lys308 together coordinate NAD(+). Residues Cys402, Cys405, Cys418, and Cys423 each contribute to the Zn(2+) site. The region spanning 578–660 (VENSPLAHKT…ELLKEAGIEA (83 aa)) is the BRCT domain.

The protein belongs to the NAD-dependent DNA ligase family. LigA subfamily. It depends on Mg(2+) as a cofactor. Mn(2+) serves as cofactor.

The enzyme catalyses NAD(+) + (deoxyribonucleotide)n-3'-hydroxyl + 5'-phospho-(deoxyribonucleotide)m = (deoxyribonucleotide)n+m + AMP + beta-nicotinamide D-nucleotide.. In terms of biological role, DNA ligase that catalyzes the formation of phosphodiester linkages between 5'-phosphoryl and 3'-hydroxyl groups in double-stranded DNA using NAD as a coenzyme and as the energy source for the reaction. It is essential for DNA replication and repair of damaged DNA. The chain is DNA ligase from Nitratiruptor sp. (strain SB155-2).